A 205-amino-acid polypeptide reads, in one-letter code: Holliday junction branch migration complex subunit RuvA (205 aa).

The segment at 1–64 (MIGKLKGLID…EDQIKLFGFR (64 aa)) is domain I. The interval 65-143 (SDLEREWFRL…GFASVDPAVA (79 aa)) is domain II. Positions 144 to 153 (HLSGAIEERS) are flexible linker. The interval 153-205 (SAPRPVADAISALVNLGYGQPQAAAAIAAAARSAGDAAQTAQLIKLGLKELSK) is domain III.

This sequence belongs to the RuvA family. In terms of assembly, homotetramer. Forms an RuvA(8)-RuvB(12)-Holliday junction (HJ) complex. HJ DNA is sandwiched between 2 RuvA tetramers; dsDNA enters through RuvA and exits via RuvB. An RuvB hexamer assembles on each DNA strand where it exits the tetramer. Each RuvB hexamer is contacted by two RuvA subunits (via domain III) on 2 adjacent RuvB subunits; this complex drives branch migration. In the full resolvosome a probable DNA-RuvA(4)-RuvB(12)-RuvC(2) complex forms which resolves the HJ.

It localises to the cytoplasm. The RuvA-RuvB-RuvC complex processes Holliday junction (HJ) DNA during genetic recombination and DNA repair, while the RuvA-RuvB complex plays an important role in the rescue of blocked DNA replication forks via replication fork reversal (RFR). RuvA specifically binds to HJ cruciform DNA, conferring on it an open structure. The RuvB hexamer acts as an ATP-dependent pump, pulling dsDNA into and through the RuvAB complex. HJ branch migration allows RuvC to scan DNA until it finds its consensus sequence, where it cleaves and resolves the cruciform DNA. This chain is Holliday junction branch migration complex subunit RuvA, found in Rhodopseudomonas palustris (strain BisA53).